The primary structure comprises 35 residues: Turgencin-B (35 aa).

Residues M5 and M9 each carry the methionine sulfoxide modification. Cystine bridges form between C7-C31, C11-C27, and C16-C24. G35 carries the glycine amide modification.

Oxidation likely reduces antimicrobial activity against Gram-positive bacteria and Gram-negative bacteria.

It localises to the secreted. Functionally, has antimicrobial activity against Gram-positive bacteria (C.glutamicum ATCC 13032 (MIC=1.6 uM) and B.subtilis ATCC 23857 (MIC=1.6 uM)) and Gram-negative bacteria (E.coli ATCC 25922 (MIC=12.5 uM) and P.aeruginosa ATCC 27853 (MIC=25.0 uM)). Displays very low activity against the Gram-positive bacteria S.aureus ATCC 9144 (MIC&gt;100 uM). The polypeptide is Turgencin-B (Synoicum turgens (Colonial ascidian)).